Here is a 715-residue protein sequence, read N- to C-terminus: Phosphoribosylformylglycinamidine synthase subunit PurL (715 aa).

His-33 is a catalytic residue. Residue Tyr-36 participates in ATP binding. Glu-77 provides a ligand contact to Mg(2+). Residues 78–81 and Arg-100 each bind substrate; that span reads SHNH. His-79 serves as the catalytic Proton acceptor. Position 101 (Asp-101) interacts with Mg(2+). Gln-225 provides a ligand contact to substrate. Asp-253 provides a ligand contact to Mg(2+). 297-299 contacts substrate; it reads ESQ. 2 residues coordinate ATP: Asn-475 and Gly-512. Asn-513 provides a ligand contact to Mg(2+). Ser-515 is a substrate binding site.

This sequence belongs to the FGAMS family. In terms of assembly, monomer. Part of the FGAM synthase complex composed of 1 PurL, 1 PurQ and 2 PurS subunits.

The protein localises to the cytoplasm. The enzyme catalyses N(2)-formyl-N(1)-(5-phospho-beta-D-ribosyl)glycinamide + L-glutamine + ATP + H2O = 2-formamido-N(1)-(5-O-phospho-beta-D-ribosyl)acetamidine + L-glutamate + ADP + phosphate + H(+). It functions in the pathway purine metabolism; IMP biosynthesis via de novo pathway; 5-amino-1-(5-phospho-D-ribosyl)imidazole from N(2)-formyl-N(1)-(5-phospho-D-ribosyl)glycinamide: step 1/2. Functionally, part of the phosphoribosylformylglycinamidine synthase complex involved in the purines biosynthetic pathway. Catalyzes the ATP-dependent conversion of formylglycinamide ribonucleotide (FGAR) and glutamine to yield formylglycinamidine ribonucleotide (FGAM) and glutamate. The FGAM synthase complex is composed of three subunits. PurQ produces an ammonia molecule by converting glutamine to glutamate. PurL transfers the ammonia molecule to FGAR to form FGAM in an ATP-dependent manner. PurS interacts with PurQ and PurL and is thought to assist in the transfer of the ammonia molecule from PurQ to PurL. In Methanosarcina acetivorans (strain ATCC 35395 / DSM 2834 / JCM 12185 / C2A), this protein is Phosphoribosylformylglycinamidine synthase subunit PurL.